Reading from the N-terminus, the 299-residue chain is Protoheme IX farnesyltransferase (299 aa).

The next 9 helical transmembrane spans lie at 25 to 45 (VVLL…RAGV), 47 to 67 (WTVL…AAAV), 95 to 115 (AAAI…LLLF), 119 to 139 (LAAW…TGFL), 147 to 167 (IVIG…AVTG), 173 to 193 (PLLL…ALAI), 218 to 238 (VHIL…YAIH), 243 to 263 (LYLV…WVLY), and 279 to 299 (IWYL…LLNI).

It belongs to the UbiA prenyltransferase family. Protoheme IX farnesyltransferase subfamily.

The protein localises to the cell inner membrane. The catalysed reaction is heme b + (2E,6E)-farnesyl diphosphate + H2O = Fe(II)-heme o + diphosphate. It participates in porphyrin-containing compound metabolism; heme O biosynthesis; heme O from protoheme: step 1/1. Functionally, converts heme B (protoheme IX) to heme O by substitution of the vinyl group on carbon 2 of heme B porphyrin ring with a hydroxyethyl farnesyl side group. The protein is Protoheme IX farnesyltransferase of Ectopseudomonas mendocina (strain ymp) (Pseudomonas mendocina).